The sequence spans 83 residues: UPF0298 protein SERP0712 (83 aa).

Belongs to the UPF0298 family.

The protein localises to the cytoplasm. The polypeptide is UPF0298 protein SERP0712 (Staphylococcus epidermidis (strain ATCC 35984 / DSM 28319 / BCRC 17069 / CCUG 31568 / BM 3577 / RP62A)).